The chain runs to 87 residues: Putative autophagy-related protein 8E (87 aa).

Basic and acidic residues predominate over residues 1 to 14 (MEERRKEKGKEGRR). The segment at 1 to 30 (MEERRKEKGKEGRRGKATGHSVDKFSRSNL) is disordered. Residue Gly87 is the site of Phosphatidylethanolamine amidated glycine attachment.

It belongs to the ATG8 family. Interacts with ATG4. In terms of processing, the C-terminal Gly is amidated with phosphatidylethanolamine by an activating system similar to that for ubiquitin.

It localises to the cytoplasmic vesicle. The protein localises to the autophagosome membrane. It is found in the vacuole membrane. Its subcellular location is the cytoplasm. The protein resides in the cytoskeleton. Its function is as follows. Ubiquitin-like modifier involved in autophagosomes formation. May mediate the delivery of the autophagosomes to the vacuole via the microtubule cytoskeleton. This is Putative autophagy-related protein 8E (ATG8E) from Oryza sativa subsp. japonica (Rice).